A 258-amino-acid polypeptide reads, in one-letter code: Phosphate import ATP-binding protein PstB (258 aa).

Residues 13–253 (IEVENLNLWY…PKEQSTEDYI (241 aa)) form the ABC transporter domain. Residue 45–52 (GPSGCGKS) participates in ATP binding.

This sequence belongs to the ABC transporter superfamily. Phosphate importer (TC 3.A.1.7) family. In terms of assembly, the complex is composed of two ATP-binding proteins (PstB), two transmembrane proteins (PstC and PstA) and a solute-binding protein (PstS).

Its subcellular location is the cell membrane. The enzyme catalyses phosphate(out) + ATP + H2O = ADP + 2 phosphate(in) + H(+). Its function is as follows. Part of the ABC transporter complex PstSACB involved in phosphate import. Responsible for energy coupling to the transport system. This is Phosphate import ATP-binding protein PstB from Methanosarcina acetivorans (strain ATCC 35395 / DSM 2834 / JCM 12185 / C2A).